The chain runs to 303 residues: Coenzyme PQQ synthesis protein B (303 aa).

This sequence belongs to the PqqB family.

It participates in cofactor biosynthesis; pyrroloquinoline quinone biosynthesis. May be involved in the transport of PQQ or its precursor to the periplasm. The chain is Coenzyme PQQ synthesis protein B from Pseudomonas putida (strain ATCC 47054 / DSM 6125 / CFBP 8728 / NCIMB 11950 / KT2440).